Here is a 73-residue protein sequence, read N- to C-terminus: Homeodomain-only protein (73 aa).

The homeobox; degenerate DNA-binding region spans 3-62; it reads AQTASGPTEDQVEILEYNFNKVNKHPDPTTLCLIAAEAGLTEEQTQKWFKQRLAEWRRSE.

In terms of assembly, interacts with serum response factor (SRF). Component of a large complex containing histone deacetylases such as HDAC2. Interacts with the acetylated forms of HSPA1A and HSPA1B. Interacts with HSPA8. Expressed in the embryonic and adult heart and in the adult brain, liver, lung, skeletal muscle, intestine and spleen. Throughout embryonic and postnatal development, it is expressed in the myocardium.

It localises to the nucleus. Its subcellular location is the cytoplasm. In terms of biological role, atypical homeodomain protein which does not bind DNA and is required to modulate cardiac growth and development. Acts via its interaction with SRF, thereby modulating the expression of SRF-dependent cardiac-specific genes and cardiac development. Prevents SRF-dependent transcription either by inhibiting SRF binding to DNA or by recruiting histone deacetylase (HDAC) proteins that prevent transcription by SRF. Overexpression causes cardiac hypertrophy. Acts as a co-chaperone for HSPA1A and HSPA1B chaperone proteins and assists in chaperone-mediated protein refolding. The chain is Homeodomain-only protein (Hopx) from Mus musculus (Mouse).